We begin with the raw amino-acid sequence, 559 residues long: Membrane protein insertase YidC (559 aa).

Helical transmembrane passes span 5-25, 332-352, 355-375, 429-449, 474-494, and 520-540; these read IVNL…WQYF, AIDF…MNFF, YVGN…LLMF, LPIL…YVTI, LFGL…WPIL, and FMPL…LIYW.

Belongs to the OXA1/ALB3/YidC family. Type 1 subfamily. In terms of assembly, interacts with the Sec translocase complex via SecD. Specifically interacts with transmembrane segments of nascent integral membrane proteins during membrane integration.

Its subcellular location is the cell inner membrane. Functionally, required for the insertion and/or proper folding and/or complex formation of integral membrane proteins into the membrane. Involved in integration of membrane proteins that insert both dependently and independently of the Sec translocase complex, as well as at least some lipoproteins. Aids folding of multispanning membrane proteins. The sequence is that of Membrane protein insertase YidC from Rickettsia bellii (strain OSU 85-389).